A 429-amino-acid polypeptide reads, in one-letter code: Enolase (429 aa).

Residue Q164 coordinates (2R)-2-phosphoglycerate. E206 functions as the Proton donor in the catalytic mechanism. Positions 243, 286, and 313 each coordinate Mg(2+). 4 residues coordinate (2R)-2-phosphoglycerate: K338, R367, S368, and K389. The active-site Proton acceptor is the K338.

Belongs to the enolase family. The cofactor is Mg(2+).

It is found in the cytoplasm. The protein resides in the secreted. It localises to the cell surface. The enzyme catalyses (2R)-2-phosphoglycerate = phosphoenolpyruvate + H2O. Its pathway is carbohydrate degradation; glycolysis; pyruvate from D-glyceraldehyde 3-phosphate: step 4/5. Functionally, catalyzes the reversible conversion of 2-phosphoglycerate (2-PG) into phosphoenolpyruvate (PEP). It is essential for the degradation of carbohydrates via glycolysis. The polypeptide is Enolase (Thermosipho africanus (strain TCF52B)).